The chain runs to 309 residues: Putative F-box protein At4g05475 (309 aa).

A disordered region spans residues 1–26 (MATSTTLQSLLMKEDEEQRNKRRTTS). Residues 37–84 (RINWVDLPPELTTSILLRLSVTDILDNARKLCRAWRRICKDPSMWRKI) enclose the F-box domain.

The protein is Putative F-box protein At4g05475 of Arabidopsis thaliana (Mouse-ear cress).